The following is a 257-amino-acid chain: UPF0246 protein Rsph17029_0026 (257 aa).

The protein belongs to the UPF0246 family.

The protein is UPF0246 protein Rsph17029_0026 of Cereibacter sphaeroides (strain ATCC 17029 / ATH 2.4.9) (Rhodobacter sphaeroides).